A 186-amino-acid chain; its full sequence is uncharacterized protein (186 aa).

The next 4 helical transmembrane spans lie at Leu-5–Ile-25, Ile-39–Ala-59, Asn-62–Phe-82, and Gly-122–Met-142.

It localises to the cell membrane. This is an uncharacterized protein from Borreliella burgdorferi (strain ATCC 35210 / DSM 4680 / CIP 102532 / B31) (Borrelia burgdorferi).